The primary structure comprises 418 residues: Zinc finger protein 566 (418 aa).

One can recognise a KRAB domain in the interval 6–77; the sequence is VMFSDVSVDF…DRELTRGQWP (72 aa). The C2H2-type 1; degenerate zinc-finger motif lies at 169 to 193; it reads KFCASKEYRKTFRHGSQFATHEIIH. C2H2-type zinc fingers lie at residues 199–221, 227–249, 255–277, 283–305, 311–333, 339–361, and 367–389; these read YECKECGKSFRHPSRLTHHQKIH, FECKECGKTFICGSDLTRHHRIH, YECKECGKAFSSGSNFTRHQRIH, YECKECGKAFSSGSNFTQHQRIH, YECKECGNAFSQSSQLIKHQRIH, YECKECEKAFRSGSDLTRHQRIH, and YECKICGKAYSQSSQLISHHRIH. Residues K314 and K328 each participate in a glycyl lysine isopeptide (Lys-Gly) (interchain with G-Cter in SUMO2) cross-link.

It belongs to the krueppel C2H2-type zinc-finger protein family.

It is found in the nucleus. In terms of biological role, may be involved in transcriptional regulation. The polypeptide is Zinc finger protein 566 (ZNF566) (Homo sapiens (Human)).